The chain runs to 534 residues: Fimbrial subunit type 2 (534 aa).

Positions 1 to 32 (MKYNTSTLGRRAAAAAGVLTLAVLGLAPMAQA) are cleaved as a signal peptide. Disordered regions lie at residues 56 to 76 (GDGN…GKGA) and 329 to 376 (TYAE…DKDG). Pro residues predominate over residues 334–347 (PPAPETPPANPDNP). Basic and acidic residues predominate over residues 361–376 (TIKKVDGNDRSGDKDG). Residues 492–496 (LPLTG) carry the LPXTG sorting signal motif. A Pentaglycyl murein peptidoglycan amidated threonine modification is found at T495. Residues 496 to 534 (GANGMLILTASGAALLMIAVGSVLVARYRERKRNRDLAA) constitute a propeptide, removed by sortase.

It is found in the secreted. Its subcellular location is the cell wall. The protein resides in the fimbrium. Its function is as follows. Major fimbrial subunit of A.naeslundii. The protein is Fimbrial subunit type 2 of Actinomyces naeslundii.